Here is a 246-residue protein sequence, read N- to C-terminus: Alpha-tubulin N-acetyltransferase (246 aa).

The 182-residue stretch at 21 to 202 (LTLVPDGVSR…NNFVVFHSFF (182 aa)) folds into the N-acetyltransferase domain. Acetyl-CoA-binding positions include 135-148 (FYVD…GYGK) and 172-181 (SNKLLGFLRK).

This sequence belongs to the acetyltransferase ATAT1 family.

The enzyme catalyses L-lysyl-[alpha-tubulin] + acetyl-CoA = N(6)-acetyl-L-lysyl-[alpha-tubulin] + CoA + H(+). Its function is as follows. Specifically acetylates 'Lys-40' in alpha-tubulin on the lumenal side of microtubules. Promotes microtubule destabilization and accelerates microtubule dynamics; this activity may be independent of acetylation activity. Acetylates alpha-tubulin with a slow enzymatic rate, due to a catalytic site that is not optimized for acetyl transfer. Enters the microtubule through each end and diffuses quickly throughout the lumen of microtubules. Acetylates only long/old microtubules because of its slow acetylation rate since it does not have time to act on dynamically unstable microtubules before the enzyme is released. The protein is Alpha-tubulin N-acetyltransferase of Leishmania infantum.